The following is a 117-amino-acid chain: Large ribosomal subunit protein bL20 (117 aa).

Belongs to the bacterial ribosomal protein bL20 family.

Functionally, binds directly to 23S ribosomal RNA and is necessary for the in vitro assembly process of the 50S ribosomal subunit. It is not involved in the protein synthesizing functions of that subunit. The sequence is that of Large ribosomal subunit protein bL20 from Campylobacter jejuni subsp. jejuni serotype O:6 (strain 81116 / NCTC 11828).